Here is a 521-residue protein sequence, read N- to C-terminus: Probable rhamnogalacturonase B (521 aa).

The N-terminal stretch at Met-1–Ala-21 is a signal peptide. Cysteines 42 and 68 form a disulfide. An N-linked (GlcNAc...) asparagine glycan is attached at Asn-145. The active-site Proton donor is the Asp-219. Cys-221 and Cys-238 are disulfide-bonded. The N-linked (GlcNAc...) asparagine glycan is linked to Asn-239. Residue His-294 is part of the active site. The N-linked (GlcNAc...) asparagine glycan is linked to Asn-321. 2 cysteine pairs are disulfide-bonded: Cys-344/Cys-350 and Cys-372/Cys-381. The segment at Glu-462–Ile-521 is disordered. Over residues Arg-469–Pro-486 the composition is skewed to polar residues. Positions Pro-507 to Ile-521 are enriched in basic residues.

It belongs to the glycosyl hydrolase 28 family.

Its subcellular location is the secreted. It carries out the reaction Endohydrolysis of alpha-D-GalA-(1-&gt;2)-alpha-L-Rha glycosidic bond in the rhamnogalacturonan I backbone with initial inversion of anomeric configuration releasing oligosaccharides with beta-D-GalA at the reducing end.. Its function is as follows. Pectinolytic enzymes consist of four classes of enzymes: pectine lyase, polygalacturonase, pectin methylesterase and rhamnogalacturonase. Hydrolyzes alpha-D-galacturonopyranosyl-(1,2)-alpha-L-rhamnopyranosyl linkages in the backbone of the hairy regions of pectins. This Aspergillus fumigatus (strain CBS 144.89 / FGSC A1163 / CEA10) (Neosartorya fumigata) protein is Probable rhamnogalacturonase B (rhgB).